The sequence spans 451 residues: Alpha-galactosidase (451 aa).

Residue 5-71 (PKITFIGAGS…ASGKITCHTQ (67 aa)) participates in NAD(+) binding. A substrate-binding site is contributed by Asn151. A Mn(2+)-binding site is contributed by Cys173. The active-site Proton donor is His174. Residue His203 coordinates Mn(2+). Arg287 lines the substrate pocket.

It belongs to the glycosyl hydrolase 4 family. Homodimer. Requires NAD(+) as cofactor. It depends on Mn(2+) as a cofactor.

The catalysed reaction is Hydrolysis of terminal, non-reducing alpha-D-galactose residues in alpha-D-galactosides, including galactose oligosaccharides, galactomannans and galactolipids.. The protein is Alpha-galactosidase (melA) of Escherichia coli (strain K12).